Consider the following 220-residue polypeptide: Type-4 uracil-DNA glycosylase (220 aa).

[4Fe-4S] cluster is bound by residues Cys14 and Cys17. Uracil-binding positions include 41-43, Phe55, and Asn82; that span reads GEA. [4Fe-4S] cluster contacts are provided by Cys86 and Cys102. Uracil is bound at residue His164.

It belongs to the uracil-DNA glycosylase (UDG) superfamily. Type 4 (UDGa) family.

It catalyses the reaction Hydrolyzes single-stranded DNA or mismatched double-stranded DNA and polynucleotides, releasing free uracil.. Its function is as follows. Removes uracil bases that are present in DNA as a result of either deamination of cytosine or misincorporation of dUMP instead of dTMP. The protein is Type-4 uracil-DNA glycosylase of Sulfurisphaera tokodaii (strain DSM 16993 / JCM 10545 / NBRC 100140 / 7) (Sulfolobus tokodaii).